Reading from the N-terminus, the 244-residue chain is Type III pantothenate kinase (244 aa).

Residue 7–14 participates in ATP binding; sequence DIGNTRLK. Residues Y95 and 102-105 contribute to the substrate site; that span reads GIDR. The active-site Proton acceptor is D104. Residue T126 coordinates ATP. Residue T177 coordinates substrate.

It belongs to the type III pantothenate kinase family. In terms of assembly, homodimer. NH4(+) is required as a cofactor. It depends on K(+) as a cofactor.

The protein resides in the cytoplasm. The catalysed reaction is (R)-pantothenate + ATP = (R)-4'-phosphopantothenate + ADP + H(+). It functions in the pathway cofactor biosynthesis; coenzyme A biosynthesis; CoA from (R)-pantothenate: step 1/5. Functionally, catalyzes the phosphorylation of pantothenate (Pan), the first step in CoA biosynthesis. This is Type III pantothenate kinase from Acinetobacter baumannii (strain AB307-0294).